A 786-amino-acid polypeptide reads, in one-letter code: Protein RDM16 (786 aa).

Composition is skewed to basic and acidic residues over residues 1-80 (MDKE…SRDR), 87-112 (RSHE…GARD), and 123-143 (NGER…KDAQ). 4 disordered regions span residues 1 to 223 (MDKE…SANL), 255 to 283 (KKAT…STGT), 532 to 557 (RPIE…EQKK), and 616 to 642 (EREQ…KERK). The segment covering 145-164 (SEGSGATNPTSGVTMGASTY) has biased composition (polar residues). The segment covering 165–176 (SSIPSEASAAPS) has biased composition (low complexity). Over residues 177–189 (QTLLTKVSSISTT) the composition is skewed to polar residues. Basic and acidic residues predominate over residues 190–203 (DENKASVVRSHEVP). Positions 268–283 (TRVPPSTTTPAVSTGT) are enriched in low complexity. The span at 534–547 (IEPPAEAAPPPPQP) shows a compositional bias: pro residues.

The protein resides in the nucleus. Its subcellular location is the nucleoplasm. Functionally, functions in the RNA-directed DNA methylation (RdDM) pathway. Acts as a pre-mRNA splicing factor, likely by affecting Pol V transcripts. Affects DNA methylation of transposable elements (TEs) and preferentially influences NRPD1- and ROS1-targeted loci. In Arabidopsis thaliana (Mouse-ear cress), this protein is Protein RDM16.